A 142-amino-acid chain; its full sequence is Large ribosomal subunit protein uL11 (142 aa).

This sequence belongs to the universal ribosomal protein uL11 family. As to quaternary structure, part of the ribosomal stalk of the 50S ribosomal subunit. Interacts with L10 and the large rRNA to form the base of the stalk. L10 forms an elongated spine to which L12 dimers bind in a sequential fashion forming a multimeric L10(L12)X complex. In terms of processing, one or more lysine residues are methylated.

Its function is as follows. Forms part of the ribosomal stalk which helps the ribosome interact with GTP-bound translation factors. The sequence is that of Large ribosomal subunit protein uL11 from Haemophilus ducreyi (strain 35000HP / ATCC 700724).